The sequence spans 772 residues: DNA ligase (772 aa).

NAD(+) is bound by residues 80–84 (DAEYD), 130–131 (SL), and glutamate 160. Lysine 162 functions as the N6-AMP-lysine intermediate in the catalytic mechanism. 4 residues coordinate NAD(+): arginine 183, glutamate 220, lysine 336, and lysine 360. The Zn(2+) site is built by cysteine 454, cysteine 457, cysteine 473, and cysteine 479. In terms of domain architecture, BRCT spans 685-772 (APEQTLEGLT…NGPQGITTIG (88 aa)).

It belongs to the NAD-dependent DNA ligase family. LigA subfamily. Mg(2+) is required as a cofactor. Mn(2+) serves as cofactor.

The enzyme catalyses NAD(+) + (deoxyribonucleotide)n-3'-hydroxyl + 5'-phospho-(deoxyribonucleotide)m = (deoxyribonucleotide)n+m + AMP + beta-nicotinamide D-nucleotide.. In terms of biological role, DNA ligase that catalyzes the formation of phosphodiester linkages between 5'-phosphoryl and 3'-hydroxyl groups in double-stranded DNA using NAD as a coenzyme and as the energy source for the reaction. It is essential for DNA replication and repair of damaged DNA. The polypeptide is DNA ligase (Cutibacterium acnes (strain DSM 16379 / KPA171202) (Propionibacterium acnes)).